We begin with the raw amino-acid sequence, 366 residues long: MAWSQSARKPMIGLLFRAQQHSARGYSYSAFQAHLSSSNVDQSATLLRRFSSEVPASEQMNLIKQLRERTSAPIKDVKASLVSCNWDIDVAQKDLRKRGVVLAAKKSSRTAAEGLLAIAQDEKRAAVVELNCETDFVARNDVFQYLASSLAKLALSARDPGELVFPFGPDYLENLNVNLDHPKLSGETTVQSAVTEVAAMVGENVKFRRGFIMSTTAHGVVCSYMHTCPQPGLGRLAGLITLEAEDSNAPLDALQRVGKSIAMHIVATKPLFLSKELVSASAVENERDILRTQAESSGKSQMAMEKMVEGRLRKYFEEVVLLEQKYVVNDSTNIKSVLNDLSKEVGSKVTVGNFARMEVGEGVSKA.

The N-terminal 50 residues, 1-50 (MAWSQSARKPMIGLLFRAQQHSARGYSYSAFQAHLSSSNVDQSATLLRRF), are a transit peptide targeting the mitochondrion.

The protein belongs to the EF-Ts family.

Its subcellular location is the mitochondrion. Its function is as follows. Associates with the EF-Tu.GDP complex and induces the exchange of GDP to GTP. It remains bound to the aminoacyl-tRNA.EF-Tu.GTP complex up to the GTP hydrolysis stage on the ribosome. The protein is Elongation factor Ts, mitochondrial of Oryza sativa subsp. japonica (Rice).